Reading from the N-terminus, the 816-residue chain is Probable transcriptional regulator SLK2 (816 aa).

Disordered stretches follow at residues 133 to 153 (HDPS…SQTN) and 166 to 189 (SFFQ…KQDD). 2 stretches are compositionally biased toward polar residues: residues 139 to 153 (LGGS…SQTN) and 166 to 176 (SFFQDPNNLTQ). Residues 307-554 (PSESSIVYWR…DQKVGPIEAL (248 aa)) form a dimerization region. The short motif at 316–330 (RKFVTEYFSPRAKKR) is the Nuclear localization signal element. Composition is skewed to polar residues over residues 644-662 (IQQE…QGTS) and 672-711 (PSIS…SGNQ). The interval 644-711 (IQQEPSRNRS…QPPSCSSGNQ (68 aa)) is disordered.

It belongs to the adn1/SEU family. In terms of assembly, forms corepressor complexes with LUH; LUH is the transcription repressor subunit and SLK2 the specific DNA-binding adapters. In terms of tissue distribution, expressed in young flower meristems, ovules and the carpel margin meristem.

It localises to the nucleus. Probable transcription regulator that functions in the development of the carpel margin meristem similarly to SEUSS (SEU). In association with SEU, supports organ development from meristematic regions by facilitating auxin response and thus organ initiation, and by sustaining meristematic potential through the maintenance of PHABULOSA expression. DNA-binding adapter subunit of the SEU-SLK2 transcriptional corepressor of abiotic stress (e.g. salt and osmotic stress) response genes. The chain is Probable transcriptional regulator SLK2 (SLK2) from Arabidopsis thaliana (Mouse-ear cress).